The chain runs to 272 residues: Undecaprenyl-diphosphatase (272 aa).

8 consecutive transmembrane segments (helical) span residues 6-26 (SLLV…LPVS), 45-65 (AKTF…VMFW), 89-109 (LSLI…LVFH), 115-135 (LFNP…LIIA), 156-176 (AFFI…RSGA), 189-209 (YAAS…ATAL), 221-241 (ADLP…LVAI), and 251-271 (ISFI…FAVF).

This sequence belongs to the UppP family.

The protein localises to the cell inner membrane. It catalyses the reaction di-trans,octa-cis-undecaprenyl diphosphate + H2O = di-trans,octa-cis-undecaprenyl phosphate + phosphate + H(+). Its function is as follows. Catalyzes the dephosphorylation of undecaprenyl diphosphate (UPP). Confers resistance to bacitracin. The chain is Undecaprenyl-diphosphatase from Cronobacter sakazakii (strain ATCC BAA-894) (Enterobacter sakazakii).